A 252-amino-acid polypeptide reads, in one-letter code: 5'-nucleotidase SurE (252 aa).

Asp8, Asp9, Ser39, and Asn91 together coordinate a divalent metal cation.

Belongs to the SurE nucleotidase family. It depends on a divalent metal cation as a cofactor.

Its subcellular location is the cytoplasm. It catalyses the reaction a ribonucleoside 5'-phosphate + H2O = a ribonucleoside + phosphate. Functionally, nucleotidase that shows phosphatase activity on nucleoside 5'-monophosphates. The sequence is that of 5'-nucleotidase SurE from Legionella pneumophila (strain Paris).